The primary structure comprises 118 residues: UPF0295 protein BCE33L0445 (118 aa).

Helical transmembrane passes span I12–F32 and F43–M63.

It belongs to the UPF0295 family.

The protein localises to the cell membrane. The polypeptide is UPF0295 protein BCE33L0445 (Bacillus cereus (strain ZK / E33L)).